Consider the following 284-residue polypeptide: MLRVAVPNKGSLSQTATHILEEAGYRMRRDSKDLTSWDEQNDVEFFFLRPKDIAIYVAKGHLDLGITGRDLAADSAANGVDELLALGFGASTFRYAAPENEEWNLNKIEGKRIATSYPHLVSADLAKRGIQADVIRLDGAVEISIRLGVADIIADVVSTGRTLRQQGLSPFGDVICTSEAIIVGRHNQPVTDEHQILLRRIEGILHAKNYLMIDYNCPKSLLAEATKLTPGLSAPTVSPLADDDWVAVRAMAPRKDANQLMDRLSALGAEAILATDIRIARLTR.

Belongs to the ATP phosphoribosyltransferase family. Long subfamily. It depends on Mg(2+) as a cofactor.

It localises to the cytoplasm. It carries out the reaction 1-(5-phospho-beta-D-ribosyl)-ATP + diphosphate = 5-phospho-alpha-D-ribose 1-diphosphate + ATP. It functions in the pathway amino-acid biosynthesis; L-histidine biosynthesis; L-histidine from 5-phospho-alpha-D-ribose 1-diphosphate: step 1/9. Its activity is regulated as follows. Feedback inhibited by histidine. Its function is as follows. Catalyzes the condensation of ATP and 5-phosphoribose 1-diphosphate to form N'-(5'-phosphoribosyl)-ATP (PR-ATP). Has a crucial role in the pathway because the rate of histidine biosynthesis seems to be controlled primarily by regulation of HisG enzymatic activity. This Corynebacterium kroppenstedtii (strain DSM 44385 / JCM 11950 / CIP 105744 / CCUG 35717) protein is ATP phosphoribosyltransferase.